The following is a 347-amino-acid chain: Autoinducer 2 import system permease protein LsrC (347 aa).

Helical transmembrane passes span 14-34 (LLAIVCLFVFPGALDSQYLSV), 39-59 (MVFSSAQILMLLAIGATMVML), 72-92 (GMCAVLLGVMLNAGYSLPVAC), 93-113 (LATLILGIVAGFFNGVLVAWL), 115-135 (IPAIVATLGTLGLYRGIMLLW), 155-175 (VFLGISAIGWFTLVLALLMAW), 213-233 (LNGGMAALAGIVFTSQIGFIP), 249-269 (VLGGISLLGGSGTVIGAILGA), and 284-304 (IPAWWNDFIAGLVLLGVLVFD).

It belongs to the binding-protein-dependent transport system permease family. AraH/RbsC subfamily. The complex is composed of two ATP-binding proteins (LsrA), two transmembrane proteins (LsrC and LsrD) and a solute-binding protein (LsrB).

It is found in the cell inner membrane. In terms of biological role, part of the ABC transporter complex LsrABCD involved in autoinducer 2 (AI-2) import. Probably responsible for the translocation of the substrate across the membrane. In Salmonella choleraesuis (strain SC-B67), this protein is Autoinducer 2 import system permease protein LsrC (lsrC).